Reading from the N-terminus, the 1087-residue chain is 2'-5'-oligoadenylate synthase 3 (1087 aa).

Position 1 is an N-acetylmethionine (Met-1). The interval 6–343 is OAS domain 1; sequence TPAAALDRFV…GDPVQSWKGP (338 aa). 2 interaction with dsRNA regions span residues 12–57 and 186–200; these read DRFV…VLKT and ELRR…AKLK. The interval 344–410 is linker; it reads GLPRAGCSGL…VPGMALDLSQ (67 aa). At Thr-365 the chain carries Phosphothreonine. 2 OAS domain regions span residues 411 to 742 and 750 to 1084; these read IPTK…PWDV and TPAG…WPVK. Ser-804 is a binding site for ATP. Mg(2+) is bound by residues Asp-816, Asp-818, and Asp-888. Residues Arg-947, Lys-950, and Gln-969 each coordinate ATP.

Belongs to the 2-5A synthase family. Monomer. Mg(2+) is required as a cofactor. Present at high level in placenta trophoblast.

Its subcellular location is the cytoplasm. It is found in the nucleus. It carries out the reaction 3 ATP = 5'-triphosphoadenylyl-(2'-&gt;5')-adenylyl-(2'-&gt;5')-adenosine + 2 diphosphate. Produced as a latent enzyme which is activated by dsRNA generated during the course of viral infection. Strongly activated by long dsRNAs at least 50 nucleotides in length. ssRNA does not activate the enzyme. In terms of biological role, interferon-induced, dsRNA-activated antiviral enzyme which plays a critical role in cellular innate antiviral response. In addition, it may also play a role in other cellular processes such as apoptosis, cell growth, differentiation and gene regulation. Synthesizes preferentially dimers of 2'-5'-oligoadenylates (2-5A) from ATP which then bind to the inactive monomeric form of ribonuclease L (RNase L) leading to its dimerization and subsequent activation. Activation of RNase L leads to degradation of cellular as well as viral RNA, resulting in the inhibition of protein synthesis, thus terminating viral replication. Can mediate the antiviral effect via the classical RNase L-dependent pathway or an alternative antiviral pathway independent of RNase L. Displays antiviral activity against Chikungunya virus (CHIKV), Dengue virus, Sindbis virus (SINV) and Semliki forest virus (SFV). The polypeptide is 2'-5'-oligoadenylate synthase 3 (OAS3) (Homo sapiens (Human)).